The primary structure comprises 411 residues: 2,3-bisphosphoglycerate-independent phosphoglycerate mutase (411 aa).

Belongs to the BPG-independent phosphoglycerate mutase family. A-PGAM subfamily.

The enzyme catalyses (2R)-2-phosphoglycerate = (2R)-3-phosphoglycerate. Its pathway is carbohydrate degradation; glycolysis; pyruvate from D-glyceraldehyde 3-phosphate: step 3/5. Its function is as follows. Catalyzes the interconversion of 2-phosphoglycerate and 3-phosphoglycerate. The protein is 2,3-bisphosphoglycerate-independent phosphoglycerate mutase of Pyrobaculum neutrophilum (strain DSM 2338 / JCM 9278 / NBRC 100436 / V24Sta) (Thermoproteus neutrophilus).